Here is a 388-residue protein sequence, read N- to C-terminus: Succinate--CoA ligase [ADP-forming] subunit beta (388 aa).

In terms of domain architecture, ATP-grasp spans 9–244; sequence KQLFAEYGLP…PSQDDPREAH (236 aa). ATP is bound by residues K46, 53 to 55, E99, T102, and E107; that span reads GRG. The Mg(2+) site is built by N199 and D213. Substrate contacts are provided by residues N264 and 321–323; that span reads GIV.

It belongs to the succinate/malate CoA ligase beta subunit family. As to quaternary structure, heterotetramer of two alpha and two beta subunits. It depends on Mg(2+) as a cofactor.

The catalysed reaction is succinate + ATP + CoA = succinyl-CoA + ADP + phosphate. It carries out the reaction GTP + succinate + CoA = succinyl-CoA + GDP + phosphate. Its pathway is carbohydrate metabolism; tricarboxylic acid cycle; succinate from succinyl-CoA (ligase route): step 1/1. In terms of biological role, succinyl-CoA synthetase functions in the citric acid cycle (TCA), coupling the hydrolysis of succinyl-CoA to the synthesis of either ATP or GTP and thus represents the only step of substrate-level phosphorylation in the TCA. The beta subunit provides nucleotide specificity of the enzyme and binds the substrate succinate, while the binding sites for coenzyme A and phosphate are found in the alpha subunit. In Pseudomonas putida (strain GB-1), this protein is Succinate--CoA ligase [ADP-forming] subunit beta.